Reading from the N-terminus, the 399-residue chain is uncharacterized protein (399 aa).

It belongs to the TelA family.

This is an uncharacterized protein from Listeria monocytogenes serovar 1/2a (strain ATCC BAA-679 / EGD-e).